A 277-amino-acid chain; its full sequence is 2-dehydro-3-deoxyphosphooctonate aldolase (277 aa).

This sequence belongs to the KdsA family.

It is found in the cytoplasm. It carries out the reaction D-arabinose 5-phosphate + phosphoenolpyruvate + H2O = 3-deoxy-alpha-D-manno-2-octulosonate-8-phosphate + phosphate. Its pathway is carbohydrate biosynthesis; 3-deoxy-D-manno-octulosonate biosynthesis; 3-deoxy-D-manno-octulosonate from D-ribulose 5-phosphate: step 2/3. The protein operates within bacterial outer membrane biogenesis; lipopolysaccharide biosynthesis. This chain is 2-dehydro-3-deoxyphosphooctonate aldolase, found in Dichelobacter nodosus (strain VCS1703A).